Consider the following 232-residue polypeptide: Large ribosomal subunit protein uL1 (232 aa).

This sequence belongs to the universal ribosomal protein uL1 family. Part of the 50S ribosomal subunit.

Functionally, binds directly to 23S rRNA. The L1 stalk is quite mobile in the ribosome, and is involved in E site tRNA release. In terms of biological role, protein L1 is also a translational repressor protein, it controls the translation of the L11 operon by binding to its mRNA. In Xanthomonas campestris pv. campestris (strain B100), this protein is Large ribosomal subunit protein uL1.